We begin with the raw amino-acid sequence, 224 residues long: Octanoyl-[acyl-carrier-protein]:protein N-octanoyltransferase LIPT2, mitochondrial (224 aa).

The 181-residue stretch at 37-217 (SNIPNTLLLC…AFTEQFNCTL (181 aa)) folds into the BPL/LPL catalytic domain. Substrate is bound by residues 81–88 (RGGLITFH), 147–149 (AIG), and 160–162 (GLA). The Acyl-thioester intermediate role is filled by C178.

Belongs to the LipB family.

It is found in the mitochondrion. It catalyses the reaction octanoyl-[ACP] + L-lysyl-[protein] = N(6)-octanoyl-L-lysyl-[protein] + holo-[ACP] + H(+). It participates in protein modification; protein lipoylation via endogenous pathway; protein N(6)-(lipoyl)lysine from octanoyl-[acyl-carrier-protein]: step 1/2. Functionally, catalyzes the transfer of endogenously produced octanoic acid from octanoyl-acyl-carrier-protein (octanoyl-ACP) onto the lipoyl domains of lipoate-dependent enzymes such as the protein H of the glycine cleavage system (GCSH). Lipoyl-ACP can also act as a substrate although octanoyl-ACP is likely to be the physiological substrate. The chain is Octanoyl-[acyl-carrier-protein]:protein N-octanoyltransferase LIPT2, mitochondrial (lipt2) from Danio rerio (Zebrafish).